The following is a 407-amino-acid chain: MDNVLPGDSDLFPNISTNSSESNQFVQPAWQIVLWAAAYTVIVVTSVVGNVVVMWIILAHKRMRTVTNYFLVNLAFAEASMAAFNTVVNFTYAVHNEWYYGLFYCKFHNFFPIAAVFASIYSMTAVAFDRYMAIIHPLQPRLSATATKVVIFVIWVLALLLAFPQGYYSTTETMPGRVVCMIEWPEHPNRTYEKAYHICVTVLIYFLPLLVIGYAYTVVGITLWASEIPGDSSDRYHEQVSAKRKVVKMMIVVVCTFAICWLPFHVFFLLPYINPDLYVKKFIQQVYLAIMWLAMSSTMYNPIIYCCLNDRFRLGFKHAFRCCPFISAGDYEGLEMKSTRYLQTQGSVYKVSRLETTISTVVGAHEDEAEEGPKATPSSLDLTSNGSSRSNSKTMTESSSFYSNMLA.

The Extracellular segment spans residues 1–31 (MDNVLPGDSDLFPNISTNSSESNQFVQPAWQ). N-linked (GlcNAc...) asparagine glycans are attached at residues asparagine 14 and asparagine 18. Residues 32-54 (IVLWAAAYTVIVVTSVVGNVVVM) traverse the membrane as a helical segment. Over 55 to 64 (WIILAHKRMR) the chain is Cytoplasmic. Residues 65–86 (TVTNYFLVNLAFAEASMAAFNT) form a helical membrane-spanning segment. Over 87–106 (VVNFTYAVHNEWYYGLFYCK) the chain is Extracellular. An N-linked (GlcNAc...) asparagine glycan is attached at asparagine 89. Cysteine 105 and cysteine 180 are disulfide-bonded. Residues 107–128 (FHNFFPIAAVFASIYSMTAVAF) traverse the membrane as a helical segment. The Cytoplasmic segment spans residues 129–148 (DRYMAIIHPLQPRLSATATK). A helical transmembrane segment spans residues 149-169 (VVIFVIWVLALLLAFPQGYYS). The Extracellular segment spans residues 170–194 (TTETMPGRVVCMIEWPEHPNRTYEK). Asparagine 189 carries an N-linked (GlcNAc...) asparagine glycan. Residues 195–219 (AYHICVTVLIYFLPLLVIGYAYTVV) traverse the membrane as a helical segment. Residues 220–248 (GITLWASEIPGDSSDRYHEQVSAKRKVVK) lie on the Cytoplasmic side of the membrane. A helical membrane pass occupies residues 249–270 (MMIVVVCTFAICWLPFHVFFLL). The Extracellular segment spans residues 271 to 283 (PYINPDLYVKKFI). Residues 284–308 (QQVYLAIMWLAMSSTMYNPIIYCCL) form a helical membrane-spanning segment. The Cytoplasmic portion of the chain corresponds to 309–407 (NDRFRLGFKH…SSSFYSNMLA (99 aa)). Cysteine 322 is lipidated: S-palmitoyl cysteine. A disordered region spans residues 365–407 (HEDEAEEGPKATPSSLDLTSNGSSRSNSKTMTESSSFYSNMLA). Residues 376–407 (TPSSLDLTSNGSSRSNSKTMTESSSFYSNMLA) are compositionally biased toward polar residues.

The protein belongs to the G-protein coupled receptor 1 family. In terms of assembly, interacts with ARRB1.

The protein localises to the cell membrane. In terms of biological role, this is a receptor for the tachykinin neuropeptide substance P. It is probably associated with G proteins that activate a phosphatidylinositol-calcium second messenger system. This Meriones unguiculatus (Mongolian jird) protein is Substance-P receptor (TACR1).